We begin with the raw amino-acid sequence, 185 residues long: Ribosome-recycling factor (185 aa).

Belongs to the RRF family.

The protein resides in the cytoplasm. Responsible for the release of ribosomes from messenger RNA at the termination of protein biosynthesis. May increase the efficiency of translation by recycling ribosomes from one round of translation to another. In Buchnera aphidicola subsp. Acyrthosiphon pisum (strain Tuc7), this protein is Ribosome-recycling factor.